The chain runs to 383 residues: Sulfate adenylyltransferase (383 aa).

The protein belongs to the sulfate adenylyltransferase family.

The enzyme catalyses sulfate + ATP + H(+) = adenosine 5'-phosphosulfate + diphosphate. It participates in sulfur metabolism; hydrogen sulfide biosynthesis; sulfite from sulfate: step 1/3. The polypeptide is Sulfate adenylyltransferase (Halothermothrix orenii (strain H 168 / OCM 544 / DSM 9562)).